Here is a 512-residue protein sequence, read N- to C-terminus: Cytochrome P450 1A1 (512 aa).

Residues S29–P40 are mitochondrial targeting signal. The O-linked (GlcNAc) serine glycan is linked to S67. Residue F224 participates in substrate binding. Heme is bound at residue C457.

The protein belongs to the cytochrome P450 family. In terms of assembly, interacts with cytosolic chaperones HSP70 and HSP90; this interaction is required for initial targeting to mitochondria. Interacts (via mitochondrial targeting signal) with TOMM40 (via N-terminus); this interaction is required for translocation across the mitochondrial outer membrane. Heme serves as cofactor. As to expression, lung, lymphocytes and placenta.

The protein resides in the endoplasmic reticulum membrane. It is found in the mitochondrion inner membrane. The protein localises to the microsome membrane. It localises to the cytoplasm. The catalysed reaction is an organic molecule + reduced [NADPH--hemoprotein reductase] + O2 = an alcohol + oxidized [NADPH--hemoprotein reductase] + H2O + H(+). The enzyme catalyses estrone + reduced [NADPH--hemoprotein reductase] + O2 = 2-hydroxyestrone + oxidized [NADPH--hemoprotein reductase] + H2O + H(+). It catalyses the reaction estrone + reduced [NADPH--hemoprotein reductase] + O2 = 4-hydroxyestrone + oxidized [NADPH--hemoprotein reductase] + H2O + H(+). It carries out the reaction estrone + reduced [NADPH--hemoprotein reductase] + O2 = 6alpha-hydroxyestrone + oxidized [NADPH--hemoprotein reductase] + H2O + H(+). The catalysed reaction is estrone + reduced [NADPH--hemoprotein reductase] + O2 = 15alpha-hydroxyestrone + oxidized [NADPH--hemoprotein reductase] + H2O + H(+). The enzyme catalyses estrone + reduced [NADPH--hemoprotein reductase] + O2 = 16alpha-hydroxyestrone + oxidized [NADPH--hemoprotein reductase] + H2O + H(+). It catalyses the reaction 17beta-estradiol + reduced [NADPH--hemoprotein reductase] + O2 = 2-hydroxy-17beta-estradiol + oxidized [NADPH--hemoprotein reductase] + H2O + H(+). It carries out the reaction 17beta-estradiol + reduced [NADPH--hemoprotein reductase] + O2 = 4-hydroxy-17beta-estradiol + oxidized [NADPH--hemoprotein reductase] + H2O + H(+). The catalysed reaction is 17beta-estradiol + reduced [NADPH--hemoprotein reductase] + O2 = 6alpha-hydroxy-17beta-estradiol + oxidized [NADPH--hemoprotein reductase] + H2O + H(+). The enzyme catalyses 17beta-estradiol + reduced [NADPH--hemoprotein reductase] + O2 = 7alpha-hydroxy-17beta-estradiol + oxidized [NADPH--hemoprotein reductase] + H2O + H(+). It catalyses the reaction 17beta-estradiol + reduced [NADPH--hemoprotein reductase] + O2 = 15alpha-hydroxy-17beta-estradiol + oxidized [NADPH--hemoprotein reductase] + H2O + H(+). It carries out the reaction (5Z,8Z,11Z)-eicosatrienoate + reduced [NADPH--hemoprotein reductase] + O2 = 19-hydroxy-(5Z,8Z,11Z)-eicosatrienoate + oxidized [NADPH--hemoprotein reductase] + H2O + H(+). The catalysed reaction is (5Z,8Z,11Z,14Z)-eicosatetraenoate + reduced [NADPH--hemoprotein reductase] + O2 = 16-hydroxy-(5Z,8Z,11Z,14Z)-eicosatetraenoate + oxidized [NADPH--hemoprotein reductase] + H2O + H(+). The enzyme catalyses (5Z,8Z,11Z,14Z)-eicosatetraenoate + reduced [NADPH--hemoprotein reductase] + O2 = 17-hydroxy-(5Z,8Z,11Z,14Z)-eicosatetraenoate + oxidized [NADPH--hemoprotein reductase] + H2O + H(+). It catalyses the reaction (5Z,8Z,11Z,14Z)-eicosatetraenoate + reduced [NADPH--hemoprotein reductase] + O2 = 18-hydroxy-(5Z,8Z,11Z,14Z)-eicosatetraenoate + oxidized [NADPH--hemoprotein reductase] + H2O + H(+). It carries out the reaction (5Z,8Z,11Z,14Z)-eicosatetraenoate + reduced [NADPH--hemoprotein reductase] + O2 = 19-hydroxy-(5Z,8Z,11Z,14Z)-eicosatetraenoate + oxidized [NADPH--hemoprotein reductase] + H2O + H(+). The catalysed reaction is (5Z,8Z,11Z,14Z,17Z)-eicosapentaenoate + reduced [NADPH--hemoprotein reductase] + O2 = 19-hydroxy-(5Z,8Z,11Z,14Z,17Z)-eicosapentaenoate + oxidized [NADPH--hemoprotein reductase] + H2O + H(+). The enzyme catalyses (5Z,8Z,11Z,14Z)-eicosatetraenoate + reduced [NADPH--hemoprotein reductase] + O2 = (8R,9S)-epoxy-(5Z,11Z,14Z)-eicosatrienoate + oxidized [NADPH--hemoprotein reductase] + H2O + H(+). It catalyses the reaction (5Z,8Z,11Z,14Z)-eicosatetraenoate + reduced [NADPH--hemoprotein reductase] + O2 = (11R,12S)-epoxy-(5Z,8Z,14Z)-eicosatrienoate + oxidized [NADPH--hemoprotein reductase] + H2O + H(+). It carries out the reaction (5Z,8Z,11Z,14Z)-eicosatetraenoate + reduced [NADPH--hemoprotein reductase] + O2 = (14S,15R)-epoxy-(5Z,8Z,11Z)-eicosatrienoate + oxidized [NADPH--hemoprotein reductase] + H2O + H(+). The catalysed reaction is (5Z,8Z,11Z,14Z)-eicosatetraenoate + reduced [NADPH--hemoprotein reductase] + O2 = (14R,15S)-epoxy-(5Z,8Z,11Z)-eicosatrienoate + oxidized [NADPH--hemoprotein reductase] + H2O + H(+). The enzyme catalyses (5Z,8Z,11Z,14Z,17Z)-eicosapentaenoate + reduced [NADPH--hemoprotein reductase] + O2 = (17R,18S)-epoxy-(5Z,8Z,11Z,14Z)-eicosatetraenoate + oxidized [NADPH--hemoprotein reductase] + H2O + H(+). It catalyses the reaction (4Z,7Z,10Z,13Z,16Z,19Z)-docosahexaenoate + reduced [NADPH--hemoprotein reductase] + O2 = (19S,20R)-epoxy-(4Z,7Z,10Z,13Z,16Z)-docosapentaenoate + oxidized [NADPH--hemoprotein reductase] + H2O + H(+). It carries out the reaction (4Z,7Z,10Z,13Z,16Z,19Z)-docosahexaenoate + reduced [NADPH--hemoprotein reductase] + O2 = (19R,20S)-epoxy-(4Z,7Z,10Z,13Z,16Z)-docosapentaenoate + oxidized [NADPH--hemoprotein reductase] + H2O + H(+). The catalysed reaction is all-trans-retinol + reduced [NADPH--hemoprotein reductase] + O2 = all-trans-retinal + oxidized [NADPH--hemoprotein reductase] + 2 H2O + H(+). The enzyme catalyses all-trans-retinal + reduced [NADPH--hemoprotein reductase] + O2 = all-trans-retinoate + oxidized [NADPH--hemoprotein reductase] + H2O + 2 H(+). It catalyses the reaction (13S)-hydroperoxy-(9Z,11E)-octadecadienoate = 13-oxo-(9Z,11E)-octadecadienoate + H2O. It carries out the reaction (12S)-hydroperoxy-(5Z,8Z,10E,14Z)-eicosatetraenoate = 12-oxo-(5Z,8Z,10E,14Z)-eicosatetraenoate + H2O. The catalysed reaction is (15S)-hydroperoxy-(5Z,8Z,11Z,13E)-eicosatetraenoate = 15-oxo-(5Z,8Z,11Z,13E)-eicosatetraenoate + H2O. The enzyme catalyses (5S)-hydroperoxy-(6E,8Z,11Z,14Z)-eicosatetraenoate = 5-oxo-(6E,8Z,11Z,14Z)-eicosatetraenoate + H2O. It functions in the pathway steroid hormone biosynthesis. Its pathway is lipid metabolism; fatty acid metabolism. The protein operates within cofactor metabolism; retinol metabolism. In terms of biological role, a cytochrome P450 monooxygenase involved in the metabolism of various endogenous substrates, including fatty acids, steroid hormones and vitamins. Mechanistically, uses molecular oxygen inserting one oxygen atom into a substrate, and reducing the second into a water molecule, with two electrons provided by NADPH via cytochrome P450 reductase (NADPH--hemoprotein reductase). Catalyzes the hydroxylation of carbon-hydrogen bonds. Exhibits high catalytic activity for the formation of hydroxyestrogens from estrone (E1) and 17beta-estradiol (E2), namely 2-hydroxy E1 and E2, as well as D-ring hydroxylated E1 and E2 at the C15-alpha and C16-alpha positions. Displays different regioselectivities for polyunsaturated fatty acids (PUFA) hydroxylation. Catalyzes the epoxidation of double bonds of certain PUFA. Converts arachidonic acid toward epoxyeicosatrienoic acid (EET) regioisomers, 8,9-, 11,12-, and 14,15-EET, that function as lipid mediators in the vascular system. Displays an absolute stereoselectivity in the epoxidation of eicosapentaenoic acid (EPA) producing the 17(R),18(S) enantiomer. May play an important role in all-trans retinoic acid biosynthesis in extrahepatic tissues. Catalyzes two successive oxidative transformation of all-trans retinol to all-trans retinal and then to the active form all-trans retinoic acid. May also participate in eicosanoids metabolism by converting hydroperoxide species into oxo metabolites (lipoxygenase-like reaction, NADPH-independent). The sequence is that of Cytochrome P450 1A1 from Homo sapiens (Human).